The following is a 145-amino-acid chain: Bacilliredoxin BH2759 (145 aa).

The protein belongs to the bacilliredoxin family.

This Halalkalibacterium halodurans (strain ATCC BAA-125 / DSM 18197 / FERM 7344 / JCM 9153 / C-125) (Bacillus halodurans) protein is Bacilliredoxin BH2759.